A 40-amino-acid chain; its full sequence is Dolichyl-diphosphooligosaccharide--protein glycosyltransferase subunit 4 (40 aa).

The Lumenal segment spans residues 1 to 4; it reads MITD. Residues 5 to 25 form a helical membrane-spanning segment; the sequence is VQLAIFSNVLGVFLFLLVVAY. The Cytoplasmic portion of the chain corresponds to 26-40; sequence HYINANTGKPIPKAK.

It belongs to the OST4 family. Component of the oligosaccharyltransferase (OST) complex.

It localises to the endoplasmic reticulum membrane. In terms of biological role, subunit of the oligosaccharyl transferase (OST) complex that catalyzes the initial transfer of a defined glycan (Glc(3)Man(9)GlcNAc(2) in eukaryotes) from the lipid carrier dolichol-pyrophosphate to an asparagine residue within an Asn-X-Ser/Thr consensus motif in nascent polypeptide chains, the first step in protein N-glycosylation. N-glycosylation occurs cotranslationally and the complex associates with the Sec61 complex at the channel-forming translocon complex that mediates protein translocation across the endoplasmic reticulum (ER). All subunits are required for a maximal enzyme activity. The protein is Dolichyl-diphosphooligosaccharide--protein glycosyltransferase subunit 4 of Drosophila ananassae (Fruit fly).